The following is a 572-amino-acid chain: Phosphoglucomutase-2 (572 aa).

Residues T23, R27, 126–127, and K140 each bind substrate; that span reads SH. Residue S126 is the Phosphoserine intermediate of the active site. Position 126 (S126) interacts with Mg(2+). D308, D310, and D312 together coordinate Mg(2+). Substrate is bound by residues 312–313, T373, 392–394, K405, and R527; these read DR and EES.

The protein belongs to the phosphohexose mutase family. The cofactor is Mg(2+). Phosphorylated via a calcium-dependent protein kinase.

Its subcellular location is the cytoplasm. The enzyme catalyses alpha-D-glucose 1-phosphate = alpha-D-glucose 6-phosphate. Its function is as follows. May be involved in membrane fusion in exocytosis. The chain is Phosphoglucomutase-2 (pp63-2) from Paramecium tetraurelia.